Reading from the N-terminus, the 212-residue chain is Agglutinin isolectin 1 (212 aa).

A signal peptide spans 1-26 (MKMMSTRALALGAAAVLAFAAATAQA). At glutamine 27 the chain carries Pyrrolidone carboxylic acid. Chitin-binding type-1 domains lie at 27–68 (QRCG…ACWT), 69–111 (SKRC…PCRA), 112–154 (DIKC…ACST), and 155–197 (DKPC…GCDG). Intrachain disulfides connect cysteine 29/cysteine 44, cysteine 38/cysteine 50, cysteine 43/cysteine 57, cysteine 61/cysteine 66, cysteine 72/cysteine 87, cysteine 81/cysteine 93, cysteine 86/cysteine 100, cysteine 104/cysteine 109, cysteine 115/cysteine 130, cysteine 124/cysteine 136, cysteine 129/cysteine 143, cysteine 147/cysteine 152, cysteine 158/cysteine 173, cysteine 167/cysteine 179, cysteine 172/cysteine 186, and cysteine 190/cysteine 195. 36–38 (MEC) serves as a coordination point for substrate. Residue 88–99 (SQYGYCGFGAEY) coordinates substrate. 140-141 (SE) is a binding site for substrate. The propeptide occupies 198 to 212 (VFAEAITANSTLLQE).

Homodimer, u-shaped.

N-acetyl-D-glucosamine / N-acetyl-D-neuraminic acid binding lectin. In Triticum aestivum (Wheat), this protein is Agglutinin isolectin 1.